We begin with the raw amino-acid sequence, 117 residues long: MFLFRRKDYRIEIQKKKVVKSFFQMVYYRALRQHFCQTKSFKHSSKRNVSMMVIGKHRAYLKSLRHHIKGFIITFLVSFSRNLHGKTLDVGSINATRISSPPDNFLNWVFSFYSCSE.

This is an uncharacterized protein from Saccharomyces cerevisiae (strain ATCC 204508 / S288c) (Baker's yeast).